The primary structure comprises 147 residues: Hemoglobin subunit beta (147 aa).

At V2 the chain carries N-acetylvaline. The Globin domain maps to 3–147; sequence HLTPEEKNAV…VANALAHKYH (145 aa). T13 bears the Phosphothreonine mark. Position 45 is a phosphoserine (S45). K60 carries the post-translational modification N6-acetyllysine. H64 is a heme b binding site. K83 is subject to N6-acetyllysine. Position 93 (H93) interacts with heme b. C94 bears the S-nitrosocysteine mark. K145 is subject to N6-acetyllysine.

Belongs to the globin family. In terms of assembly, heterotetramer of two alpha chains and two beta chains. As to expression, red blood cells.

Involved in oxygen transport from the lung to the various peripheral tissues. The protein is Hemoglobin subunit beta (HBB) of Macaca fascicularis (Crab-eating macaque).